A 163-amino-acid chain; its full sequence is Protein-export protein SecB (163 aa).

It belongs to the SecB family. Homotetramer, a dimer of dimers. One homotetramer interacts with 1 SecA dimer.

The protein resides in the cytoplasm. One of the proteins required for the normal export of preproteins out of the cell cytoplasm. It is a molecular chaperone that binds to a subset of precursor proteins, maintaining them in a translocation-competent state. It also specifically binds to its receptor SecA. This chain is Protein-export protein SecB, found in Pseudomonas aeruginosa (strain LESB58).